We begin with the raw amino-acid sequence, 96 residues long: Progonadoliberin-1 (96 aa).

The N-terminal stretch at 1–26 (MHRKMAVKTLSVWLLLVGTLVPQHCC) is a signal peptide. Gln-27 carries the pyrrolidone carboxylic acid modification. Residue Gly-36 is modified to Glycine amide.

The protein belongs to the GnRH family. As to expression, preoptic area of the brain.

The protein localises to the secreted. Functionally, stimulates the secretion of gonadotropins. The polypeptide is Progonadoliberin-1 (gnrh1) (Verasper moseri (Barfin flounder)).